The sequence spans 922 residues: 1,4-alpha-glucan-branching enzyme 1, chloroplastic/amyloplastic (922 aa).

A chloroplast-targeting transit peptide spans 1 to 47 (MVYTISGIRFPVLPSLHKSTLRCDRRASSHSFFLKNNSSSFSRTSLY). The disordered stretch occupies residues 83-130 (LENPDITSEDAQNLEDLTMKDGNKYNIDESTSSYREVGDEKGSVTSSS). The segment covering 99 to 109 (LTMKDGNKYNI) has biased composition (basic and acidic residues). The Nucleophile role is filled by D494. E549 functions as the Proton donor in the catalytic mechanism. A disordered region spans residues 870–922 (VESEPIELSVEEAESEPIERSVEEVESETTQQSVEVESETTQQSVEVESETTQ). Residues 897 to 922 (ETTQQSVEVESETTQQSVEVESETTQ) are compositionally biased toward low complexity.

It belongs to the glycosyl hydrolase 13 family. GlgB subfamily. As to quaternary structure, monomer. As to expression, expressed in roots, leaves, stipules, pods and flowers.

Its subcellular location is the plastid. The protein localises to the chloroplast. It is found in the amyloplast. The enzyme catalyses Transfers a segment of a (1-&gt;4)-alpha-D-glucan chain to a primary hydroxy group in a similar glucan chain.. Its pathway is glycan biosynthesis; starch biosynthesis. Functionally, catalyzes the formation of the alpha-1,6-glucosidic linkages in starch by scission of a 1,4-alpha-linked oligosaccharide from growing alpha-1,4-glucan chains and the subsequent attachment of the oligosaccharide to the alpha-1,6 position. May preferentially transfer short chains during branching. Responsible for the synthesis of about 75% of the amylopectin found in the starch granules of mature embryos. This chain is 1,4-alpha-glucan-branching enzyme 1, chloroplastic/amyloplastic (SBEI), found in Pisum sativum (Garden pea).